The following is a 590-amino-acid chain: Acetylcholinesterase (590 aa).

A signal peptide spans 1–24; it reads MREMNLLVTSSLGVLLHLVVLCQA. N-linked (GlcNAc...) asparagine glycosylation occurs at Asn83. Cysteines 91 and 118 form a disulfide. Residue Ser224 is the Acyl-ester intermediate of the active site. An intrachain disulfide couples Cys278 to Cys289. The Charge relay system role is filled by Glu351. Cys426 and Cys545 are joined by a disulfide. Asn440 carries an N-linked (GlcNAc...) asparagine glycan. The Charge relay system role is filled by His464. Residues Asn481 and Asn557 are each glycosylated (N-linked (GlcNAc...) asparagine). Ser567 carries GPI-anchor amidated serine lipidation. Positions 568–590 are cleaved as a propeptide — removed in mature form; that stretch reads SGTSSSKGIIFYVLFSILYLIFY.

It belongs to the type-B carboxylesterase/lipase family. As to quaternary structure, isoform H form is a homodimer; the asymmetric form is a disulfide-bonded oligomer composed of a collagenic subunit (Q) and a variable number of T catalytic subunits. Post-translationally, an interchain disulfide bond is present in what becomes position 596 of the T isoform. In terms of tissue distribution, found in the synapses and to a lower extent in extrajunctional areas of muscle and nerve, and on erythrocyte membranes.

The protein localises to the cell membrane. The protein resides in the synapse. The catalysed reaction is acetylcholine + H2O = choline + acetate + H(+). Terminates signal transduction at the neuromuscular junction by rapid hydrolysis of the acetylcholine released into the synaptic cleft. May be involved in cell-cell interactions. The polypeptide is Acetylcholinesterase (ache) (Torpedo marmorata (Marbled electric ray)).